A 333-amino-acid chain; its full sequence is Photosystem II assembly lipoprotein Ycf48 (333 aa).

A signal peptide spans 1–23 (MKRLLNSATQLLLVLVLGISLSG). Cys-24 carries N-palmitoyl cysteine lipidation. Residue Cys-24 is the site of S-diacylglycerol cysteine attachment.

Belongs to the Ycf48 family. As to quaternary structure, part of early PSII assembly complexes which includes D1 (psbA) and PsbI; not found in mature PSII. Binds to the lumenal side of PSII complexes. Interacts with YidC.

It is found in the cellular thylakoid membrane. Its function is as follows. A factor required for optimal assembly of photosystem II (PSII), acting in the early stages of PSII assembly. Also plays a role in replacement of photodamaged D1 (psbA). Assists YidC in synthesis of chlorophyll-binding proteins. This is Photosystem II assembly lipoprotein Ycf48 from Synechococcus sp. (strain CC9605).